The following is a 223-amino-acid chain: B-cell antigen receptor complex-associated protein alpha chain (223 aa).

An N-terminal signal peptide occupies residues 1-31 (MPEGPQALQSPPATIFLLLISAAGLGPGCQA). Positions 32–120 (LWVEWGPPSV…KIQRSCGTYL (89 aa)) constitute an Ig-like C2-type domain. At 32–140 (LWVEWGPPSV…LDMGEGTKNN (109 aa)) the chain is on the extracellular side. The cysteines at positions 53 and 104 are disulfide-linked. N-linked (GlcNAc...) asparagine glycans are attached at residues asparagine 56, asparagine 61, asparagine 71, and asparagine 95. A helical membrane pass occupies residues 141 to 161 (IITAEGIILLICAVVPGTLLL). At 162–223 (FRKRWQNMKF…HIGDAQLEKP (62 aa)) the chain is on the cytoplasmic side. Residues 174-202 (DIQDDYEDENLYEGLNLDDCSMYEDISRG) form the ITAM domain. Tyrosine 185 is subject to Phosphotyrosine; by SRC-type Tyr-kinases. Tyrosine 196 carries the phosphotyrosine modification. Arginine 201 is subject to Asymmetric dimethylarginine; by PRMT1. Residue tyrosine 207 is modified to Phosphotyrosine; by Tyr-kinases.

In terms of assembly, heterodimer of alpha and beta chains; disulfide-linked. Part of the B-cell antigen receptor complex where the alpha/beta chain heterodimer is non-covalently associated with an antigen-specific membrane-bound surface immunoglobulin of two heavy chains and two light chains. Interacts through its phosphorylated ITAM domain with the SH2 domains of SYK which stimulates SYK autophosphorylation and activation. Also interacts, when phosphorylated on Tyr-207, with the SH2 domain of BLNK/SLP65, bringing BLNK into proximity with SYK and allowing SYK to phosphorylate BLNK which is necessary for trafficking of the BCR to late endosomes. Interacts with Src-family tyrosine kinases including FYN and LYN, increasing their activity. Post-translationally, phosphorylated on tyrosine, serine and threonine residues upon B-cell activation. Phosphorylation of tyrosine residues by Src-family kinases, including LYN, is an early and essential feature of the BCR signaling cascade. The phosphorylated tyrosines serve as docking sites for SH2-domain containing kinases, leading to their activation which in turn leads to phosphorylation of downstream targets. Phosphorylation of serine and threonine residues may prevent subsequent tyrosine phosphorylation. Arginine methylation in the ITAM domain may interfere with the binding of SYK. It promotes signals leading to B-cell differentiation. As to expression, B-cells.

It localises to the cell membrane. Its function is as follows. Required in cooperation with CD79B for initiation of the signal transduction cascade activated by binding of antigen to the B-cell antigen receptor complex (BCR) which leads to internalization of the complex, trafficking to late endosomes and antigen presentation. Also required for BCR surface expression and for efficient differentiation of pro- and pre-B-cells. Stimulates SYK autophosphorylation and activation. Binds to BLNK, bringing BLNK into proximity with SYK and allowing SYK to phosphorylate BLNK. Also interacts with and increases activity of some Src-family tyrosine kinases. Represses BCR signaling during development of immature B-cells. The polypeptide is B-cell antigen receptor complex-associated protein alpha chain (CD79A) (Bos taurus (Bovine)).